The following is a 943-amino-acid chain: Protein translocase subunit SecA (943 aa).

Residues glutamine 90, 108–112, and aspartate 509 contribute to the ATP site; that span reads GEGKT. Residues 537-556 are disordered; it reads NEHKPPIPKQRSSKSKGGFS.

Belongs to the SecA family. Monomer and homodimer. Part of the essential Sec protein translocation apparatus which comprises SecA, SecYEG and auxiliary proteins SecDF. Other proteins may also be involved.

The protein localises to the cell inner membrane. It localises to the cellular thylakoid membrane. The protein resides in the cytoplasm. It catalyses the reaction ATP + H2O + cellular proteinSide 1 = ADP + phosphate + cellular proteinSide 2.. Part of the Sec protein translocase complex. Interacts with the SecYEG preprotein conducting channel. Has a central role in coupling the hydrolysis of ATP to the transfer of proteins into and across the cell membrane, serving as an ATP-driven molecular motor driving the stepwise translocation of polypeptide chains across the membrane. Functionally, probably participates in protein translocation into and across both the cytoplasmic and thylakoid membranes in cyanobacterial cells. The chain is Protein translocase subunit SecA from Prochlorococcus marinus (strain MIT 9301).